The following is a 416-amino-acid chain: CinA-like protein (416 aa).

This sequence belongs to the CinA family.

The sequence is that of CinA-like protein from Nostoc punctiforme (strain ATCC 29133 / PCC 73102).